The primary structure comprises 957 residues: Glycine dehydrogenase (decarboxylating) (957 aa).

Residue lysine 708 is modified to N6-(pyridoxal phosphate)lysine.

The protein belongs to the GcvP family. The glycine cleavage system is composed of four proteins: P, T, L and H. The cofactor is pyridoxal 5'-phosphate.

It catalyses the reaction N(6)-[(R)-lipoyl]-L-lysyl-[glycine-cleavage complex H protein] + glycine + H(+) = N(6)-[(R)-S(8)-aminomethyldihydrolipoyl]-L-lysyl-[glycine-cleavage complex H protein] + CO2. Functionally, the glycine cleavage system catalyzes the degradation of glycine. The P protein binds the alpha-amino group of glycine through its pyridoxal phosphate cofactor; CO(2) is released and the remaining methylamine moiety is then transferred to the lipoamide cofactor of the H protein. The protein is Glycine dehydrogenase (decarboxylating) of Salmonella typhi.